Here is a 267-residue protein sequence, read N- to C-terminus: Thiamine thiazole synthase (267 aa).

NAD(+)-binding positions include Ser-41, 60 to 61, Gly-68, Val-132, and 160 to 162; these read ER and HVD. Positions 162 and 177 each coordinate Fe cation. Position 227 (Met-227) interacts with NAD(+). Arg-237 contributes to the glycine binding site.

The protein belongs to the THI4 family. In terms of assembly, homooctamer; tetramer of dimers. It depends on Fe(2+) as a cofactor.

The catalysed reaction is hydrogen sulfide + glycine + NAD(+) = ADP-5-ethyl-4-methylthiazole-2-carboxylate + nicotinamide + 3 H2O + H(+). The protein operates within cofactor biosynthesis; thiamine diphosphate biosynthesis. Functionally, involved in the biosynthesis of the thiazole moiety of thiamine. Catalyzes the conversion of NAD and glycine to adenosine diphosphate 5-(2-hydroxyethyl)-4-methylthiazole-2-carboxylate (ADT), an adenylated thiazole intermediate, using free sulfide as a source of sulfur. This is Thiamine thiazole synthase from Saccharolobus islandicus (strain L.S.2.15 / Lassen #1) (Sulfolobus islandicus).